We begin with the raw amino-acid sequence, 558 residues long: Putative transposase for insertion sequence IS1162 (558 aa).

An HTH IS408-type domain is found at 11–93 (IKECLRLKFE…PDLITIHREL (83 aa)). The segment at residues 23-44 (LSHEKIARALQLSKGVVSKYVT) is a DNA-binding region (H-T-H motif). The region spanning 139–336 (QQHRAGEKLF…HPYEVVTFKR (198 aa)) is the Integrase catalytic domain. Residues 486–558 (QGLDQQPLPK…AAGQPQPELR (73 aa)) form a disordered region.

The protein belongs to the transposase IS21/IS408/IS1162 family.

In terms of biological role, required for the transposition of the insertion element. In Pseudomonas fluorescens, this protein is Putative transposase for insertion sequence IS1162.